Here is a 304-residue protein sequence, read N- to C-terminus: MSTNNTTTNNEDLISSLYPPPPPYYKFFTKDNLQKLSTWQENNQTTTVSSEVKLEEENTDPDSNNSEENSIPPGELRFLIPPKQPEGPQYRGYGNIWLFEDKLPNLKDSQWEQLYNTSTSTFTSTSTSTANTNIITNTDTDINGNQEVDAGDSTGDENLTSETKIKELHKLMDSLLLNFLELIGILSIDPIKYDKKIHDINLILININHLLNTYRPHQSRESLIMLLKNQIDYKFLEIDQINKKCLDIKSKIKNLINERITVVSDGTTTNTTTTTKTTGLGDGDSIDEKEQLKQDIINRLLSSI.

2 disordered regions span residues 42–85 and 137–158; these read NNQT…PKQP and NTDT…GDEN.

It belongs to the Mediator complex subunit 7 family. In terms of assembly, component of the Mediator complex.

The protein localises to the nucleus. Its function is as follows. Component of the Mediator complex, a coactivator involved in the regulated transcription of nearly all RNA polymerase II-dependent genes. Mediator functions as a bridge to convey information from gene-specific regulatory proteins to the basal RNA polymerase II transcription machinery. Mediator is recruited to promoters by direct interactions with regulatory proteins and serves as a scaffold for the assembly of a functional preinitiation complex with RNA polymerase II and the general transcription factors. The polypeptide is Mediator of RNA polymerase II transcription subunit 7 (MED7) (Candida albicans (strain SC5314 / ATCC MYA-2876) (Yeast)).